Here is a 691-residue protein sequence, read N- to C-terminus: Pleckstrin homology domain-containing family G member 7 (691 aa).

2 disordered regions span residues 1-48 and 109-140; these read MEKT…ISTS and TSEP…LQPV. The region spanning 313–488 is the DH domain; that stretch reads MIFMNTLRYL…EGKVKWLDNF (176 aa). An N-linked (GlcNAc...) asparagine glycan is attached at Asn395. The region spanning 535 to 668 is the PH domain; it reads HLLYEGKLTL…WMAQITTAIS (134 aa).

The protein is Pleckstrin homology domain-containing family G member 7 of Homo sapiens (Human).